Here is a 161-residue protein sequence, read N- to C-terminus: Cyclic pyranopterin monophosphate synthase (161 aa).

Substrate-binding positions include 75 to 77 (MCH) and 115 to 116 (ME). Aspartate 130 is an active-site residue.

This sequence belongs to the MoaC family. As to quaternary structure, homohexamer; trimer of dimers.

The enzyme catalyses (8S)-3',8-cyclo-7,8-dihydroguanosine 5'-triphosphate = cyclic pyranopterin phosphate + diphosphate. It participates in cofactor biosynthesis; molybdopterin biosynthesis. Its function is as follows. Catalyzes the conversion of (8S)-3',8-cyclo-7,8-dihydroguanosine 5'-triphosphate to cyclic pyranopterin monophosphate (cPMP). The chain is Cyclic pyranopterin monophosphate synthase from Bacillus cereus (strain 03BB102).